The chain runs to 106 residues: UPF0060 membrane protein RL1530 (106 aa).

A run of 4 helical transmembrane segments spans residues 4 to 24 (IIFAFAALFEIAGCFAFWAWL), 30 to 50 (VWWLAPGMVSLALFAWILTLV), 58 to 78 (TFAAYGGIYILASLLWLWLVE), and 86 to 106 (DIGGALICLAGASLILFAPRG).

Belongs to the UPF0060 family.

It localises to the cell inner membrane. This is UPF0060 membrane protein RL1530 from Rhizobium johnstonii (strain DSM 114642 / LMG 32736 / 3841) (Rhizobium leguminosarum bv. viciae).